We begin with the raw amino-acid sequence, 272 residues long: HMP-PP phosphatase (272 aa).

The Nucleophile role is filled by Asp8. Positions 8, 10, and 212 each coordinate Mg(2+).

It belongs to the HAD-like hydrolase superfamily. Cof family. It depends on Mg(2+) as a cofactor.

It catalyses the reaction 4-amino-2-methyl-5-(diphosphooxymethyl)pyrimidine + H2O = 4-amino-2-methyl-5-(phosphooxymethyl)pyrimidine + phosphate + H(+). In terms of biological role, catalyzes the hydrolysis of 4-amino-2-methyl-5-hydroxymethylpyrimidine pyrophosphate (HMP-PP) to 4-amino-2-methyl-5-hydroxymethylpyrimidine phosphate (HMP-P). In Cronobacter sakazakii (strain ATCC BAA-894) (Enterobacter sakazakii), this protein is HMP-PP phosphatase.